The primary structure comprises 484 residues: Trigger factor (484 aa).

Residues 165-244 (GDFVQIDLTA…VQSVKERELP (80 aa)) enclose the PPIase FKBP-type domain. The interval 429-484 (DAVSEEPADADAEAVVADAPAEEAAEAPAAEEAPAEKPKKKAPAKKKASEKAADSE) is disordered. Positions 430 to 440 (AVSEEPADADA) are enriched in acidic residues. Over residues 475 to 484 (KASEKAADSE) the composition is skewed to basic and acidic residues.

This sequence belongs to the FKBP-type PPIase family. Tig subfamily.

It localises to the cytoplasm. The enzyme catalyses [protein]-peptidylproline (omega=180) = [protein]-peptidylproline (omega=0). Its function is as follows. Involved in protein export. Acts as a chaperone by maintaining the newly synthesized protein in an open conformation. Functions as a peptidyl-prolyl cis-trans isomerase. The chain is Trigger factor from Clavibacter michiganensis subsp. michiganensis (strain NCPPB 382).